The following is an 80-amino-acid chain: MGLKMSSNALLLSLFLLLLCLFSEIGGSETTHWKIVEEPVRGQIATPPSLTCGGQRLGGPQPRLSPCPRPRPRPRPRTGS.

An N-terminal signal peptide occupies residues 1 to 27; the sequence is MGLKMSSNALLLSLFLLLLCLFSEIGG. A disordered region spans residues 44–80; the sequence is IATPPSLTCGGQRLGGPQPRLSPCPRPRPRPRPRTGS. The SCOOP motif motif lies at 62–80; it reads PRLSPCPRPRPRPRPRTGS. Residues 70–80 show a composition bias toward basic residues; it reads PRPRPRPRTGS.

The protein belongs to the serine rich endogenous peptide (SCOOP) phytocytokine family. In terms of assembly, interacts with MIK2 (via extracellular leucine-rich repeat domain); this interaction triggers the formation of complex between MIK2 and the BAK1/SERK3 and SERK4 coreceptors, and subsequent BAK1 activation by phosphorylation. In terms of tissue distribution, mostly expressed in leaves, and, to a lower extent, in roots, stems, siliques, seeds and flowers.

It localises to the cell membrane. The protein localises to the secreted. The protein resides in the extracellular space. It is found in the apoplast. Its subcellular location is the endoplasmic reticulum. It localises to the golgi apparatus. In terms of biological role, brassicaceae-specific phytocytokine (plant endogenous peptide released into the apoplast) perceived by MIK2 in a BAK1/SERK3 and SERK4 coreceptors-dependent manner, that modulates various physiological and antimicrobial processes including growth prevention and reactive oxygen species (ROS) response regulation. This Arabidopsis thaliana (Mouse-ear cress) protein is Secreted transmembrane peptide 3.